The following is a 715-amino-acid chain: Scinderin (715 aa).

Positions 1-363 (MAQGLYHEEF…DGFGKVYVTE (363 aa)) are actin-severing. One copy of the Gelsolin-like 1 repeat lies at 27–77 (LELVPVPESAYGNFYVGDAYLVLHTTQASRGFTYRLHFWLGKECTQDESTA). A Phosphotyrosine modification is found at Tyr102. A 1,2-diacyl-sn-glycero-3-phospho-(1D-myo-inositol-4,5-bisphosphate) is bound by residues 112 to 119 (KGGLKYKA) and 138 to 146 (RLLHVKGRR). Gelsolin-like repeat units follow at residues 148 to 188 (VRAT…YERL), 265 to 307 (LVAE…QERK), 398 to 451 (VQIW…DELT), and 523 to 564 (TRIM…EEEK). The segment at 364-715 (KVAHVKQIPF…WFLGWDSSRW (352 aa)) is actin-binding, Ca-sensitive. The ca(2+)-dependent actin binding stretch occupies residues 364 to 715 (KVAHVKQIPF…WFLGWDSSRW (352 aa)). Residues Asn538, Asp539, and Glu562 each coordinate Ca(2+). Tyr599 bears the Phosphotyrosine mark. The Gelsolin-like 6 repeat unit spans residues 626-668 (FIIEEVPGEFTQDDLAEDDVMLLDAWEQIFIWIGKDANEVEKS). Asp643, Asp644, and Glu666 together coordinate Ca(2+).

This sequence belongs to the villin/gelsolin family. In terms of processing, the N-terminus is blocked. As to expression, in the adrenal gland, expressed in the medulla but, in the cortex, found only in diffuse parts.

It localises to the cytoplasm. The protein resides in the cytoskeleton. It is found in the cell projection. The protein localises to the podosome. Its function is as follows. Ca(2+)-dependent actin filament-severing protein that has a regulatory function in exocytosis by affecting the organization of the microfilament network underneath the plasma membrane. In vitro, also has barbed end capping and nucleating activities in the presence of Ca(2+). Severing activity is inhibited by phosphatidylinositol 4,5-bis-phosphate (PIP2). Required for megakaryocyte differentiation, maturation, polyploidization and apoptosis with the release of platelet-like particles. Plays a role in osteoclastogenesis (OCG) and actin cytoskeletal organization in osteoclasts. Regulates chondrocyte proliferation and differentiation. Inhibits cell proliferation and tumorigenesis. Signaling is mediated by MAPK, p38 and JNK pathways. This Bos taurus (Bovine) protein is Scinderin.